The following is a 243-amino-acid chain: Flavin-dependent thymidylate synthase (243 aa).

A ThyX domain is found at 2-207; sequence VKVKLINYTP…ELKPIIEWAK (206 aa). Residues Ser56, 80–82, and Gln88 each bind FAD; that span reads RHR. Residues 77 to 80, 88 to 92, and Arg146 contribute to the dUMP site; these read QLVR and QQSQR. The ThyX motif signature appears at 80–90; it reads RHRIASYTQQS. FAD contacts are provided by residues 162-164 and His168; that span reads NLR. Arg173 serves as a coordination point for dUMP. Arg173 serves as the catalytic Involved in ionization of N3 of dUMP, leading to its activation.

Belongs to the thymidylate synthase ThyX family. Homotetramer. The cofactor is FAD.

The enzyme catalyses dUMP + (6R)-5,10-methylene-5,6,7,8-tetrahydrofolate + NADPH + H(+) = dTMP + (6S)-5,6,7,8-tetrahydrofolate + NADP(+). It functions in the pathway pyrimidine metabolism; dTTP biosynthesis. Catalyzes the reductive methylation of 2'-deoxyuridine-5'-monophosphate (dUMP) to 2'-deoxythymidine-5'-monophosphate (dTMP) while utilizing 5,10-methylenetetrahydrofolate (mTHF) as the methyl donor, and NADPH and FADH(2) as the reductant. This Pyrococcus horikoshii (strain ATCC 700860 / DSM 12428 / JCM 9974 / NBRC 100139 / OT-3) protein is Flavin-dependent thymidylate synthase.